The following is a 465-amino-acid chain: Cytochrome P450 85A2 (465 aa).

A helical membrane pass occupies residues 2–22 (GIMMMILGLLVIIVCLCTALL). Cys415 provides a ligand contact to heme. A lipid anchor (S-farnesyl cysteine) is attached at Cys462. A Farnesylation CAAX motif motif is present at residues 462-465 (CSPY).

This sequence belongs to the cytochrome P450 family. Heme serves as cofactor. Isoprenylated (farnesylated); this addition of a 15-carbon farnesyl isoprenoid to the carboxy terminus is required for endoplasmic reticulum localization and essential for the biosynthesis of brassinolide. As to expression, expressed in stems, hypocotyls, leaves, siliques, shoots, and roots, with a higher expression in apical shoots.

It localises to the membrane. Its subcellular location is the endoplasmic reticulum. It carries out the reaction 6-deoxoteasterone + reduced [NADPH--hemoprotein reductase] + O2 = 6alpha-hydroxyteasterone + oxidized [NADPH--hemoprotein reductase] + H2O + H(+). The enzyme catalyses 6alpha-hydroxytyphasterol + reduced [NADPH--hemoprotein reductase] + O2 = teasterone + oxidized [NADPH--hemoprotein reductase] + 2 H2O + H(+). It catalyses the reaction 3-dehydro-6-deoxoteasterone + reduced [NADPH--hemoprotein reductase] + O2 = 3-dehydro-6alpha-hydroxyteasterone + oxidized [NADPH--hemoprotein reductase] + H2O + H(+). The catalysed reaction is 3-dehydro-6alpha-hydroxyteasterone + reduced [NADPH--hemoprotein reductase] + O2 = 3-dehydroteasterone + oxidized [NADPH--hemoprotein reductase] + 2 H2O + H(+). It carries out the reaction 6-deoxotyphasterol + reduced [NADPH--hemoprotein reductase] + O2 = 6alpha-hydroxytyphasterol + oxidized [NADPH--hemoprotein reductase] + H2O + H(+). The enzyme catalyses 6alpha-hydroxytyphasterol + reduced [NADPH--hemoprotein reductase] + O2 = typhasterol + oxidized [NADPH--hemoprotein reductase] + 2 H2O + H(+). It catalyses the reaction 6-deoxocastasterone + reduced [NADPH--hemoprotein reductase] + O2 = 6alpha-hydroxycastasterone + oxidized [NADPH--hemoprotein reductase] + H2O + H(+). The catalysed reaction is 6alpha-hydroxycastasterone + reduced [NADPH--hemoprotein reductase] + O2 = castasterone + oxidized [NADPH--hemoprotein reductase] + 2 H2O + H(+). It carries out the reaction 6-deoxo-28-norteasterone + 2 reduced [NADPH--hemoprotein reductase] + 2 O2 = 28-norteasterone + 2 oxidized [NADPH--hemoprotein reductase] + 3 H2O + 2 H(+). The enzyme catalyses 6-deoxo-28-norteasterone + reduced [NADPH--hemoprotein reductase] + O2 = 6alpha-hydroxy-28-norteasterone + oxidized [NADPH--hemoprotein reductase] + H2O + H(+). It catalyses the reaction 6alpha-hydroxy-28-norteasterone + reduced [NADPH--hemoprotein reductase] + O2 = 28-norteasterone + oxidized [NADPH--hemoprotein reductase] + 2 H2O + H(+). The catalysed reaction is 6-deoxo-28-nortyphasterol + 2 reduced [NADPH--hemoprotein reductase] + 2 O2 = 28-nortyphasterol + 2 oxidized [NADPH--hemoprotein reductase] + 3 H2O + 2 H(+). It carries out the reaction 6-deoxo-28-nortyphasterol + reduced [NADPH--hemoprotein reductase] + O2 = 6alpha-hydroxy-28-nortyphasterol + oxidized [NADPH--hemoprotein reductase] + H2O + H(+). The enzyme catalyses 6alpha-hydroxy-28-nortyphasterol + reduced [NADPH--hemoprotein reductase] + O2 = 28-nortyphasterol + oxidized [NADPH--hemoprotein reductase] + 2 H2O + H(+). It catalyses the reaction 6-deoxo-28-norcastasterone + 2 reduced [NADPH--hemoprotein reductase] + 2 O2 = 28-norcastasterone + 2 oxidized [NADPH--hemoprotein reductase] + 3 H2O + 2 H(+). The catalysed reaction is 6-deoxo-28-norcastasterone + reduced [NADPH--hemoprotein reductase] + O2 = 6alpha-hydroxy-28-norcastasterone + oxidized [NADPH--hemoprotein reductase] + H2O + H(+). It carries out the reaction 6alpha-hydroxy-28-norcastasterone + reduced [NADPH--hemoprotein reductase] + O2 = 28-norcastasterone + oxidized [NADPH--hemoprotein reductase] + 2 H2O + H(+). The enzyme catalyses 3-dehydro-6-deoxo-28-norteasterone + 2 reduced [NADPH--hemoprotein reductase] + 2 O2 = 6-dehydro-28-norteasterone + 2 oxidized [NADPH--hemoprotein reductase] + 3 H2O + 2 H(+). It catalyses the reaction 3-dehydro-6-deoxo-28-norteasterone + reduced [NADPH--hemoprotein reductase] + O2 = 3-dehydro-6alpha-hydroxy-28-norteasterone + oxidized [NADPH--hemoprotein reductase] + H2O + H(+). The catalysed reaction is 3-dehydro-6alpha-hydroxy-28-norteasterone + reduced [NADPH--hemoprotein reductase] + O2 = 6-dehydro-28-norteasterone + oxidized [NADPH--hemoprotein reductase] + 2 H2O + H(+). It carries out the reaction teasterone + reduced [NADPH--hemoprotein reductase] + O2 = 7-oxateasterone + oxidized [NADPH--hemoprotein reductase] + H2O + H(+). The enzyme catalyses castasterone + reduced [NADPH--hemoprotein reductase] + O2 = brassinolide + oxidized [NADPH--hemoprotein reductase] + H2O + H(+). It catalyses the reaction typhasterol + reduced [NADPH--hemoprotein reductase] + O2 = 7-oxatyphasterol + oxidized [NADPH--hemoprotein reductase] + H2O + H(+). The catalysed reaction is 6-deoxocastasterone + 2 reduced [NADPH--hemoprotein reductase] + 2 O2 = castasterone + 2 oxidized [NADPH--hemoprotein reductase] + 3 H2O + 2 H(+). It carries out the reaction 6-deoxoteasterone + 2 reduced [NADPH--hemoprotein reductase] + 2 O2 = teasterone + 2 oxidized [NADPH--hemoprotein reductase] + 3 H2O + 2 H(+). The enzyme catalyses 6-deoxotyphasterol + 2 reduced [NADPH--hemoprotein reductase] + 2 O2 = typhasterol + 2 oxidized [NADPH--hemoprotein reductase] + 3 H2O + 2 H(+). It catalyses the reaction 3-dehydro-6-deoxoteasterone + 2 reduced [NADPH--hemoprotein reductase] + 2 O2 = 3-dehydroteasterone + 2 oxidized [NADPH--hemoprotein reductase] + 3 H2O + 2 H(+). Its pathway is plant hormone biosynthesis; brassinosteroid biosynthesis. Its function is as follows. Mediates Baeyer-Villiger oxidation and catalyzes the C6-oxidation step and lactonization in brassinosteroids biosynthesis. Converts 6-deoxocastasterone (6-deoxoCS) to castasterone (CS), and castasterone to brassinolide (BL). May also convert 6-deoxoteasterone (6-deoxoTE) to teasterone (TE), 3-dehydro-6-deoxoteasterone (6-deoxo3DT, 6-deoxo-3-DHT) to 3-dehydroteasterone (3DT, 3-DHT), and 6-deoxotyphasterol (6-deoxoTY) to typhasterol (TY). Also seems to be able to convert teasterone (TE) and typhasterol (TY) to 7-oxateasterone (7-OXTE) and 7-oxatyphasterol (7-OXTY), respectively. Catalyzes the conversion of 6-deoxo-28-norteasterone (6-deoxo-28-norTE) to 28-norteasterone (28-norTE), 6-deoxo-28-nordeoxoteasterone (6-deoxo-28-nor-3-DHT) to 28-nordeoxoteasterone (28-nor-3-DHT), 6-deoxo-28-nortyphasterol (6-deoxo-28-norTY) to 28-nortyphasterol (28-norTY) and 6-deoxo-28-norcastasterone (6-deoxo-28-norCS) to 28-norcastasterone (28-norCS). Involved in a negative regulation of responses to abscisic acid (ABA) and drought tolerance. The chain is Cytochrome P450 85A2 (CYP85A2) from Arabidopsis thaliana (Mouse-ear cress).